We begin with the raw amino-acid sequence, 301 residues long: Mycothiol acetyltransferase (301 aa).

N-acetyltransferase domains are found at residues 7-150 and 152-301; these read VDWQ…PPVD and VRFA…AVEG. D39 contributes to the 1D-myo-inositol 2-(L-cysteinylamino)-2-deoxy-alpha-D-glucopyranoside binding site. Residues 80–82 and 88–93 contribute to the acetyl-CoA site; these read LVV and RRGIGS. 1D-myo-inositol 2-(L-cysteinylamino)-2-deoxy-alpha-D-glucopyranoside is bound by residues E179, K220, and E228. 232–234 lines the acetyl-CoA pocket; that stretch reads VGV. Residue Y271 participates in 1D-myo-inositol 2-(L-cysteinylamino)-2-deoxy-alpha-D-glucopyranoside binding. 276–281 contacts acetyl-CoA; sequence NTAAVK.

Belongs to the acetyltransferase family. MshD subfamily. As to quaternary structure, monomer.

The catalysed reaction is 1D-myo-inositol 2-(L-cysteinylamino)-2-deoxy-alpha-D-glucopyranoside + acetyl-CoA = mycothiol + CoA + H(+). In terms of biological role, catalyzes the transfer of acetyl from acetyl-CoA to desacetylmycothiol (Cys-GlcN-Ins) to form mycothiol. The protein is Mycothiol acetyltransferase of Mycolicibacterium vanbaalenii (strain DSM 7251 / JCM 13017 / BCRC 16820 / KCTC 9966 / NRRL B-24157 / PYR-1) (Mycobacterium vanbaalenii).